Here is a 236-residue protein sequence, read N- to C-terminus: ATP synthase subunit a, chloroplastic (236 aa).

Helical transmembrane passes span 25–45 (MHGQVLINSWIVLGLIIAFAV), 87–107 (FIGTLFLFIFVSNWSGALIPW), 123–143 (DINTTVALALLTSLTYFYAGL), 180–202 (LFGNILADELVVAVLVSLVPLVI), and 210–230 (GLFTSGIQALIFATLAGAYIG).

This sequence belongs to the ATPase A chain family. F-type ATPases have 2 components, CF(1) - the catalytic core - and CF(0) - the membrane proton channel. CF(1) has five subunits: alpha(3), beta(3), gamma(1), delta(1), epsilon(1). CF(0) has four main subunits: a, b, b' and c.

The protein localises to the plastid. It is found in the chloroplast thylakoid membrane. Key component of the proton channel; it plays a direct role in the translocation of protons across the membrane. The protein is ATP synthase subunit a, chloroplastic of Ostreococcus tauri.